The following is a 257-amino-acid chain: Homeobox protein goosecoid (257 aa).

The segment at residues 160–219 (KRRHRTIFTDEQLEALENLFQETKYPDVGTREQLARKVHLREEKVEVWFKNRRAKWRRQK) is a DNA-binding region (homeobox). The interval 213–257 (AKWRRQKRSSSEESENAEKWNKTSSSKASPEKREEEGKSDLDSDS) is disordered. A compositionally biased stretch (basic and acidic residues) spans 241–257 (SPEKREEEGKSDLDSDS).

The protein belongs to the paired homeobox family. Bicoid subfamily.

The protein localises to the nucleus. Regulates chordin (CHRD). May play a role in spatial programing within discrete embryonic fields or lineage compartments during organogenesis. In concert with NKX3-2, plays a role in defining the structural components of the middle ear; required for the development of the entire tympanic ring. Probably involved in the regulatory networks that define neural crest cell fate specification and determine mesoderm cell lineages in mammals. The protein is Homeobox protein goosecoid (GSC) of Gorilla gorilla gorilla (Western lowland gorilla).